Consider the following 458-residue polypeptide: Argininosuccinate lyase (458 aa).

This sequence belongs to the lyase 1 family. Argininosuccinate lyase subfamily.

It is found in the cytoplasm. It catalyses the reaction 2-(N(omega)-L-arginino)succinate = fumarate + L-arginine. It participates in amino-acid biosynthesis; L-arginine biosynthesis; L-arginine from L-ornithine and carbamoyl phosphate: step 3/3. In Salmonella dublin (strain CT_02021853), this protein is Argininosuccinate lyase.